The sequence spans 345 residues: tRNA pseudouridine synthase B (345 aa).

Residues 1 to 33 are disordered; the sequence is MGGNSQPHQEPRRVNNDPRAKQQKGNQVRRDRR. Positions 9–20 are enriched in basic and acidic residues; it reads QEPRRVNNDPRA. The Nucleophile role is filled by D72.

The protein belongs to the pseudouridine synthase TruB family. Type 1 subfamily.

The catalysed reaction is uridine(55) in tRNA = pseudouridine(55) in tRNA. In terms of biological role, responsible for synthesis of pseudouridine from uracil-55 in the psi GC loop of transfer RNAs. This Bradyrhizobium diazoefficiens (strain JCM 10833 / BCRC 13528 / IAM 13628 / NBRC 14792 / USDA 110) protein is tRNA pseudouridine synthase B.